The primary structure comprises 277 residues: Phosphatidylserine decarboxylase proenzyme (277 aa).

Residues aspartate 88, histidine 144, and serine 242 each act as charge relay system; for autoendoproteolytic cleavage activity in the active site. The Schiff-base intermediate with substrate; via pyruvic acid; for decarboxylase activity role is filled by serine 242. Serine 242 bears the Pyruvic acid (Ser); by autocatalysis mark.

This sequence belongs to the phosphatidylserine decarboxylase family. PSD-B subfamily. Prokaryotic type I sub-subfamily. In terms of assembly, heterodimer of a large membrane-associated beta subunit and a small pyruvoyl-containing alpha subunit. Pyruvate serves as cofactor. Is synthesized initially as an inactive proenzyme. Formation of the active enzyme involves a self-maturation process in which the active site pyruvoyl group is generated from an internal serine residue via an autocatalytic post-translational modification. Two non-identical subunits are generated from the proenzyme in this reaction, and the pyruvate is formed at the N-terminus of the alpha chain, which is derived from the carboxyl end of the proenzyme. The autoendoproteolytic cleavage occurs by a canonical serine protease mechanism, in which the side chain hydroxyl group of the serine supplies its oxygen atom to form the C-terminus of the beta chain, while the remainder of the serine residue undergoes an oxidative deamination to produce ammonia and the pyruvoyl prosthetic group on the alpha chain. During this reaction, the Ser that is part of the protease active site of the proenzyme becomes the pyruvoyl prosthetic group, which constitutes an essential element of the active site of the mature decarboxylase.

Its subcellular location is the cell membrane. The enzyme catalyses a 1,2-diacyl-sn-glycero-3-phospho-L-serine + H(+) = a 1,2-diacyl-sn-glycero-3-phosphoethanolamine + CO2. Its pathway is phospholipid metabolism; phosphatidylethanolamine biosynthesis; phosphatidylethanolamine from CDP-diacylglycerol: step 2/2. Catalyzes the formation of phosphatidylethanolamine (PtdEtn) from phosphatidylserine (PtdSer). The polypeptide is Phosphatidylserine decarboxylase proenzyme (Psychrobacter arcticus (strain DSM 17307 / VKM B-2377 / 273-4)).